The primary structure comprises 298 residues: MKVVLFYDQGRAHSVAAICEVLCAQGCAVTPHAIEQVWNDTSPCSTPLALVQDATHVFFLYAHEPMRDPAFIFFSGVACGRGMHVLLLATTTEVRDIHVFRDLVFLLEEETFEDFFRVEHERFVRQKKKRVARTALLERGYPCFEENFIATVMDGNIDIVNLFLDAGFSAALKDARGTPVLSLAVREGQDEMAAQLIARGAPVDQLSDDRAYSALMEAAQIGNRTVARLLLHAGADPNVRGSNGQTALVLAVGRKDHVLIRLLMDHGANPYLEDKLGLSAQGYAKLFNDPTLCTLVGV.

ANK repeat units lie at residues 143–172 (CFEENFIATVMDGNIDIVNLFLDAGFSAAL), 176–205 (RGTPVLSLAVREGQDEMAAQLIARGAPVDQ), 210–239 (RAYSALMEAAQIGNRTVARLLLHAGADPNV), and 243–272 (NGQTALVLAVGRKDHVLIRLLMDHGANPYL).

The chain is Putative ankyrin repeat-containing protein TP_0502 from Treponema pallidum (strain Nichols).